Here is a 243-residue protein sequence, read N- to C-terminus: Voltage-gated monoatomic cation channel TMEM109 (243 aa).

The N-terminal stretch at 1 to 33 is a signal peptide; it reads MAASSISSPWGKHVFKAILMVLVALILLHSALA. Residues 34-83 are Lumenal-facing; that stretch reads QSRRDFAPPGQQKREAPVDVLTQIGRSVRGTLDAWIGPETMHLVSESSSQ. The helical transmembrane segment at 84–104 threads the bilayer; the sequence is VLWAISSAISVAFFALSGIAA. Over 105 to 135 the chain is Cytoplasmic; the sequence is QLLNALGLAGDYLAQGLKLSPGQVQTFLLWG. Residues 136–156 form a helical membrane-spanning segment; sequence AGALVVYWLLSLLLGLVLALL. Residues 157–185 lie on the Lumenal side of the membrane; the sequence is GRILWGLKLVIFLAGFVALMRSVPDPSTR. Residues 186–205 traverse the membrane as a helical segment; the sequence is ALLLLALLILYALLSRLTGS. At 206–243 the chain is on the cytoplasmic side; the sequence is RASGAQLEAKVRGLERQVEELRWRQRRAAKGARSVEEE.

Homooligomer. Interacts with CRYAB; in the cellular response to DNA damage.

It is found in the nucleus outer membrane. It localises to the endoplasmic reticulum membrane. Its subcellular location is the sarcoplasmic reticulum membrane. It carries out the reaction K(+)(in) = K(+)(out). The enzyme catalyses Ca(2+)(in) = Ca(2+)(out). Functions as a voltage-gated monoatomic cation channel permeable to both potassium and calcium. Plays a role in the cellular response to DNA damage. The sequence is that of Voltage-gated monoatomic cation channel TMEM109 from Homo sapiens (Human).